Reading from the N-terminus, the 380-residue chain is Putative zinc finger protein C02F5.12 (380 aa).

The tract at residues 137-187 (NLDIPGTSSDIPSDPSSALKVPKKEVLDESEEILDQTSGSSSFSLNDSEQA) is disordered. Composition is skewed to polar residues over residues 142 to 152 (GTSSDIPSDPS) and 171 to 187 (DQTSGSSSFSLNDSEQA). The segment at 271 to 294 (IPCKLCGFECTNVRRMRSHYAKAH) adopts a C2H2-type zinc-finger fold.

The protein resides in the nucleus. This Caenorhabditis elegans protein is Putative zinc finger protein C02F5.12.